The following is a 163-amino-acid chain: Phosphopantetheine adenylyltransferase (163 aa).

A substrate-binding site is contributed by serine 9. ATP is bound by residues 9 to 10 (SF) and histidine 17. Substrate contacts are provided by lysine 41, valine 78, and arginine 92. ATP is bound by residues 93–95 (GLR), glutamate 103, and 128–134 (SRPITAT).

The protein belongs to the bacterial CoaD family. In terms of assembly, homohexamer. The cofactor is Mg(2+).

The protein resides in the cytoplasm. The enzyme catalyses (R)-4'-phosphopantetheine + ATP + H(+) = 3'-dephospho-CoA + diphosphate. It functions in the pathway cofactor biosynthesis; coenzyme A biosynthesis; CoA from (R)-pantothenate: step 4/5. Its function is as follows. Reversibly transfers an adenylyl group from ATP to 4'-phosphopantetheine, yielding dephospho-CoA (dPCoA) and pyrophosphate. In Rhizobium meliloti (strain 1021) (Ensifer meliloti), this protein is Phosphopantetheine adenylyltransferase.